Consider the following 417-residue polypeptide: Phosphoglycerate kinase (417 aa).

Residues 24 to 26, R44, 67 to 70, R126, and R170 each bind substrate; these read DLN and HLGR. ATP-binding positions include K220, G316, E347, and 373–376; that span reads GGDS.

It belongs to the phosphoglycerate kinase family. As to quaternary structure, monomer.

Its subcellular location is the cytoplasm. It carries out the reaction (2R)-3-phosphoglycerate + ATP = (2R)-3-phospho-glyceroyl phosphate + ADP. It participates in carbohydrate degradation; glycolysis; pyruvate from D-glyceraldehyde 3-phosphate: step 2/5. The chain is Phosphoglycerate kinase from Renibacterium salmoninarum (strain ATCC 33209 / DSM 20767 / JCM 11484 / NBRC 15589 / NCIMB 2235).